A 390-amino-acid polypeptide reads, in one-letter code: DNA polymerase IV (390 aa).

Positions 6–187 constitute a UmuC domain; it reads VMHVDLDAFF…LDISIMPGIG (182 aa). Residues Asp-10 and Asp-105 each contribute to the Mg(2+) site. Residue Glu-106 is part of the active site.

It belongs to the DNA polymerase type-Y family. Monomer. The cofactor is Mg(2+).

Its subcellular location is the cytoplasm. It catalyses the reaction DNA(n) + a 2'-deoxyribonucleoside 5'-triphosphate = DNA(n+1) + diphosphate. In terms of biological role, poorly processive, error-prone DNA polymerase involved in untargeted mutagenesis. Copies undamaged DNA at stalled replication forks, which arise in vivo from mismatched or misaligned primer ends. These misaligned primers can be extended by PolIV. Exhibits no 3'-5' exonuclease (proofreading) activity. May be involved in translesional synthesis, in conjunction with the beta clamp from PolIII. This chain is DNA polymerase IV, found in Dehalococcoides mccartyi (strain ATCC BAA-2266 / KCTC 15142 / 195) (Dehalococcoides ethenogenes (strain 195)).